The chain runs to 338 residues: Inositol 2-dehydrogenase 4 (338 aa).

This sequence belongs to the Gfo/Idh/MocA family. Homotetramer.

It catalyses the reaction myo-inositol + NAD(+) = scyllo-inosose + NADH + H(+). Its function is as follows. Involved in the oxidation of myo-inositol (MI) to 2-keto-myo-inositol (2KMI or 2-inosose). The chain is Inositol 2-dehydrogenase 4 from Saccharopolyspora erythraea (strain ATCC 11635 / DSM 40517 / JCM 4748 / NBRC 13426 / NCIMB 8594 / NRRL 2338).